Consider the following 877-residue polypeptide: Putative ankyrin repeat protein R748 (877 aa).

ANK repeat units lie at residues 44–74 (IRHICLTGSYNNNQMSIMKILMNKFPKTINV), 79–109 (QNNTYLHQSIFNRHKIFVDFFMNELNDNINY), 115–145 (IGISHLHALVNYGYIDHIETAIIKDPGAIQQ), 202–231 (MGYRAIECAVRYCSTDVIDELISLGFSINE), 243–272 (NNNDLIGFATQIDRLDMVKHLINIGAPIHM), and 282–311 (LVPTCLVVAIKFKRDQCIHYLLNLPESIQA). Positions 525 to 579 (DSDEDPVCDSNESDNSNDINNHVKSDNKLNSSNDYYDEDDSEDNYNNQSDDEPLV) are disordered. Over residues 533-544 (DSNESDNSNDIN) the composition is skewed to low complexity.

The polypeptide is Putative ankyrin repeat protein R748 (Acanthamoeba polyphaga mimivirus (APMV)).